A 308-amino-acid polypeptide reads, in one-letter code: uncharacterized protein (308 aa).

Residues 43-55 are compositionally biased toward polar residues; that stretch reads SQYGTWADQHQNG. Residues 43–289 form a disordered region; that stretch reads SQYGTWADQH…KEERSEECSP (247 aa). A Phosphoserine modification is found at Ser62. Polar residues predominate over residues 80–90; that stretch reads HLSSYTESTSV. A compositionally biased stretch (basic and acidic residues) spans 91 to 109; it reads EQRDSSRDRRSSSVDRSSS. The segment covering 136-152 has biased composition (polar residues); that stretch reads IHQTSVLDSSALKTRVQ. Residues 153 to 168 are compositionally biased toward basic residues; sequence LSKRSRRRAPISHSLR. Position 166 is a phosphoserine (Ser166). Composition is skewed to basic and acidic residues over residues 175-186 and 193-216; these read SESRSPLEEESH and DSTE…ERTP. 4 positions are modified to phosphoserine: Ser205, Ser259, Ser262, and Ser288.

This is an uncharacterized protein from Mus musculus (Mouse).